A 1140-amino-acid polypeptide reads, in one-letter code: Calcium-activated potassium channel slo-1 (1140 aa).

Over 1–44 (MGEIYSPSQSKGFNQPYGYPMNCNLSRVFMEMTEEDRKCLEERK) the chain is Extracellular. The helical transmembrane segment at 45–65 (YWCFLLSSITTFCASMILVVI) threads the bilayer. Residues 66–139 (WRVVTHLCCQ…LISGQSLTGR (74 aa)) are Cytoplasmic-facing. Residues 140-161 (FLVLLVFILSIGSLIIYFYDAS) form a helical membrane-spanning segment. Over 162-178 (FQNFQVETCIPWQDSPS) the chain is Extracellular. A helical membrane pass occupies residues 179-199 (QQIDLGFNIFFLVYFFIRFIA). Over 200–203 (ASDK) the chain is Cytoplasmic. The helical transmembrane segment at 204-224 (VWFLLEMYSWIDFFTIPPSFV) threads the bilayer. Topologically, residues 225–228 (AIYL) are extracellular. Residues 229 to 249 (QRNWLGFRFLRALRLMTVPDI) form a helical; Voltage-sensor membrane-spanning segment. The Cytoplasmic segment spans residues 250-264 (LQYLNILKTSSSIRL). The chain crosses the membrane as a helical span at residues 265–285 (TQLVTIFVAVCLTGAGLVHLL). The Extracellular segment spans residues 286 to 299 (ENSGDFFKGFINPH). Residues 300-322 (RITYADSVYFVLVTMSTVGYGDI) constitute an intramembrane region (pore-forming). A Selectivity for potassium motif is present at residues 316–319 (TVGY). The Extracellular segment spans residues 323–331 (YCTTLCGRL). The chain crosses the membrane as a helical span at residues 332–352 (FMIFFILFGLAMFASYVPEIA). The Cytoplasmic portion of the chain corresponds to 353–1140 (DLIGNRQKYG…LEYEPGKRHF (788 aa)). In terms of domain architecture, RCK N-terminal 1 spans 371-514 (KKHIVVCGHI…DWKRGDDVIC (144 aa)). The segment at 520-540 (LGFIAQSCLAPGFSTMMANLF) is segment S7. The segment S8 stretch occupies residues 578–598 (MTFPEAVDLLFNRLGLLLLAI). The interval 797–817 (VLNGHVVVCLFADQDSPLIGL) is segment S9. The RCK N-terminal 2 domain maps to 799 to 953 (NGHVVVCLFA…GAKFGTNVPM (155 aa)). Positions 955 to 977 (TELVNDSNVQFLDQDDDDDPDTE) match the Calcium bowl motif. Ca(2+)-binding residues include Gln-964, Asp-967, Asp-970, and Asp-972. The tract at residues 984–1004 (FACGTAFAISVLDSLMSTTYF) is segment S10.

This sequence belongs to the potassium channel family. Calcium-activated (TC 1.A.1.3) subfamily. Slo sub-subfamily. Homotetramer; which constitutes the calcium-activated potassium channel. In terms of processing, phosphorylated. In terms of tissue distribution, expressed in synaptic regions of the nervous system including in both the nerve ring and nerve cords, as well as in the body-wall and vulval muscle. Expressed broadly in motor neurons. Forms puncta at presynaptic terminals of neurons, muscle excitation sites, and in the dorsal nerve cord.

The protein resides in the cell membrane. It localises to the synapse. In terms of biological role, potassium channel activated by both membrane depolarization or increase in cytosolic Ca(2+) that mediates export of K(+). Its activation dampens the excitatory events that elevate the cytosolic Ca(2+) concentration and/or depolarize the cell membrane. It therefore contributes to repolarization of the membrane potential. Essential for the regulation of neurotransmitter release at synapses. Regulates longevity and age-associated decline in motor activity in mid-late life, by acting in motor neurons and through daf-16 in the intestine. When clustered in neurons, mediates ethanol-induced suppression of locomotory and egg-laying behaviors. The polypeptide is Calcium-activated potassium channel slo-1 (Caenorhabditis elegans).